We begin with the raw amino-acid sequence, 403 residues long: MAKLIVSDVDVKDKKVLVRVDFNVPIKDGVIGDDNRIVAALPTIKYIIENGGKAILLSHLGRIKSDEDKKSLSLAPVAKRLGELLEKPVTFVPSNEGKEVEDAINNMKDGDVVVLENTRFQDIDNDFGKRESKNDPKLGEYWASLGDVFVNDAFGTAHRSHASNVGIATAMKAAGKPAAAGFLLEKEIKFLGNAVANPVHPFVTILGGAKVSDKIGVITNLIPKADHIIIGGGMAYTFLKAQGHNIGKSLVEDDKVEFAKELLEKAGDKLVLPIDNVAATEFNNDAASEVVGQDIPDNEMGLDIGPKTIELFKKTLEGAKTVVWNGPMGVFEMPNFAKGTLEVGRALADLPDATTIVGGGDSTAAAKQLGIAPKLTHISTGGGASLEYLEGKELPGIACVSDK.

Residues 21–23, Arg36, 59–62, Arg119, and Arg159 contribute to the substrate site; these read DFN and HLGR. ATP contacts are provided by residues Lys214, Gly301, Glu332, and 359-362; that span reads GGDS.

Belongs to the phosphoglycerate kinase family. In terms of assembly, monomer.

Its subcellular location is the cytoplasm. It carries out the reaction (2R)-3-phosphoglycerate + ATP = (2R)-3-phospho-glyceroyl phosphate + ADP. The protein operates within carbohydrate degradation; glycolysis; pyruvate from D-glyceraldehyde 3-phosphate: step 2/5. The sequence is that of Phosphoglycerate kinase from Lactobacillus delbrueckii subsp. bulgaricus (strain ATCC 11842 / DSM 20081 / BCRC 10696 / JCM 1002 / NBRC 13953 / NCIMB 11778 / NCTC 12712 / WDCM 00102 / Lb 14).